A 177-amino-acid polypeptide reads, in one-letter code: Peptide methionine sulfoxide reductase MsrA (177 aa).

C11 is a catalytic residue.

It belongs to the MsrA Met sulfoxide reductase family.

The catalysed reaction is L-methionyl-[protein] + [thioredoxin]-disulfide + H2O = L-methionyl-(S)-S-oxide-[protein] + [thioredoxin]-dithiol. The enzyme catalyses [thioredoxin]-disulfide + L-methionine + H2O = L-methionine (S)-S-oxide + [thioredoxin]-dithiol. Its function is as follows. Has an important function as a repair enzyme for proteins that have been inactivated by oxidation. Catalyzes the reversible oxidation-reduction of methionine sulfoxide in proteins to methionine. This Trichodesmium erythraeum (strain IMS101) protein is Peptide methionine sulfoxide reductase MsrA.